Consider the following 442-residue polypeptide: MITPKVLSGFKDRLPKDAIQKAQLLSKVSVVFQSFGFVPIETPHLEYAETLLPDASSDIQKEIYRFKDHGGRDVALRFDLTVPLARFVSLYHQTLGMPFKRYAIGNVFRGERAQKGRYREFTQCDFDFIGSESLVCDAEIIQVVIASLKALDLEDFCVSINHRKILNGICEYFGISQVTGVLRIVDKLEKIGLNGVEEELKKECDLNPNTIKGLLEMVQIKQDDLSHAEFFEKIAYLKDCNENLKKGIQDLEKLYQLLGDLQISQNLYKIDFSIARGLGYYTGIVYETTLNDMKSLGSVCSGGRYDHLTKNFSKEDLQGVGASIGIDRLIVALSGMQLLDERSTQAKVLIACMNEEYFSYANRLAESLRQSGIFSEVYPEAQKIKKPFSYANHKGHEFVAIIGEEEFKSETLSLKNMHSGMQLNCLSFLKALEIIGENDEDL.

Belongs to the class-II aminoacyl-tRNA synthetase family. Homodimer.

It is found in the cytoplasm. It catalyses the reaction tRNA(His) + L-histidine + ATP = L-histidyl-tRNA(His) + AMP + diphosphate + H(+). The protein is Histidine--tRNA ligase of Helicobacter acinonychis (strain Sheeba).